The primary structure comprises 347 residues: Malate dehydrogenase, mitochondrial (347 aa).

The transit peptide at 1 to 27 (MKASILRSVRSAVSRSSSSNRLLSRSF) directs the protein to the mitochondrion. NAD(+) contacts are provided by residues 41-47 (GAAGGIG) and Asp67. Positions 114 and 120 each coordinate substrate. NAD(+) is bound by residues Asn127 and 150 to 152 (ISN). The substrate site is built by Asn152 and Arg186. The Proton acceptor role is filled by His210. Residue Met261 participates in NAD(+) binding.

The protein belongs to the LDH/MDH superfamily. MDH type 1 family. In terms of assembly, homodimer.

It is found in the mitochondrion matrix. The catalysed reaction is (S)-malate + NAD(+) = oxaloacetate + NADH + H(+). The polypeptide is Malate dehydrogenase, mitochondrial (MMDH) (Citrullus lanatus (Watermelon)).